Consider the following 448-residue polypeptide: Tubulin beta-2 chain (448 aa).

Positions 11, 69, 138, 142, 143, 144, 204, and 226 each coordinate GTP. Residue Glu69 participates in Mg(2+) binding. The disordered stretch occupies residues 429-448; that stretch reads TADEDGYEYEDEEEVGEEDA.

It belongs to the tubulin family. As to quaternary structure, dimer of alpha and beta chains. A typical microtubule is a hollow water-filled tube with an outer diameter of 25 nm and an inner diameter of 15 nM. Alpha-beta heterodimers associate head-to-tail to form protofilaments running lengthwise along the microtubule wall with the beta-tubulin subunit facing the microtubule plus end conferring a structural polarity. Microtubules usually have 13 protofilaments but different protofilament numbers can be found in some organisms and specialized cells. Mg(2+) serves as cofactor.

It is found in the cytoplasm. The protein localises to the cytoskeleton. In terms of biological role, tubulin is the major constituent of microtubules, a cylinder consisting of laterally associated linear protofilaments composed of alpha- and beta-tubulin heterodimers. Microtubules grow by the addition of GTP-tubulin dimers to the microtubule end, where a stabilizing cap forms. Below the cap, tubulin dimers are in GDP-bound state, owing to GTPase activity of alpha-tubulin. The protein is Tubulin beta-2 chain (TUBB2) of Lupinus albus (White lupine).